The chain runs to 516 residues: MPTSHENALQQRCQQIVTSPVLSPEQKRHFLALEAENNLPYPQLPAEARRALDEGVICDMFEGHAPYKPRYVLPDYARFLANGSEWLELEGAKDLDDALSLLTILYHHVPSVTSMPVYLGQLDALLQPYVRILTQDEIDVRIKRFWRYLDRTLPDAFMHANIGPSDSPITRAILRADAELKQVSPNLTFIYDPEITPDDLLLEVAKNICECSKPHIANGPVHDKIFTKGGYGIVSCYNSLPLAGGGSTLVRLNLKAIAERSESLDDFFTRTLPHYCQQQIAIIDARCEFLYQQSHFFENSFLVKEGLINPERFVPMFGMYGLAEAVNLLCEKEGIAARYGKEAAANEVGYRISAQLAEFVANTPVKYGWQKRAMLHAQSGISSDIGTTPGARLPYGDEPDPITHLQTVAPHHAYYYSGISDILTLDETIKRNPQALVQLCLGAFKAGMREFTANVSGNDLVRVTGYMVRLSDLEKYRAEGSRTNTTWLGEEAARNTRILERQPRVISHEQQMRFSQ.

The protein to H.influenzae HI_0521.

This is an uncharacterized protein from Escherichia coli (strain K12).